The sequence spans 1043 residues: F-box DNA helicase 1 (1043 aa).

Residues 30-56 (QRWTNRDPNHGLYPKPRTKRGSRGQGS) are disordered. Residues 57–64 (QRCIPEFF) carry the PIP-box motif. The interval 101 to 191 (CALPQEGSAG…QDAGDVGPDP (91 aa)) is disordered. Serine 124 carries the post-translational modification Phosphoserine. The 47-residue stretch at 138–184 (SRWDGVSKKAPRHHLSVPCTRPREARQEAEDSTSRLSAESGETDQDA) folds into the F-box domain. Basic and acidic residues predominate over residues 158-170 (RPREARQEAEDST). The UvrD-like helicase ATP-binding domain maps to 442-705 (THEQQLILNH…FYLTQSFRFG (264 aa)). Position 463–470 (463–470 (AFAGTGKT)) interacts with ATP. An APIM motif motif is present at residues 807 to 811 (KFIRR).

This sequence belongs to the helicase family. UvrD subfamily. In terms of assembly, part of the SCF (SKP1-CUL1-F-box) E3 ubiquitin-protein ligase complex SCF(FBH1) composed of CUL1, SKP1, RBX1 and FBH1. Interacts with RAD51. Interacts with RPA2. Interacts (via PIP-box and RanBP2-type zinc finger) with PCNA. Post-translationally, ubiquitinated. Ubiquitination by the DCX(DTL) complex, also named CRL4(CDT2), leading to its degradation: ubiquitination takes place after its localization to DNA damage sites, possibly to facilitate the translesion synthesis (TLS) pathway.

It is found in the nucleus. The protein resides in the chromosome. The enzyme catalyses Couples ATP hydrolysis with the unwinding of duplex DNA by translocating in the 3'-5' direction.. It carries out the reaction ATP + H2O = ADP + phosphate + H(+). It functions in the pathway protein modification; protein ubiquitination. Functionally, 3'-5' DNA helicase and substrate-recognition component of the SCF(FBH1) E3 ubiquitin ligase complex that plays a key role in response to stalled/damaged replication forks. Involved in genome maintenance by acting as an anti-recombinogenic helicase and preventing extensive strand exchange during homologous recombination: promotes RAD51 filament dissolution from stalled forks, thereby inhibiting homologous recombination and preventing excessive recombination. Also promotes cell death and DNA double-strand breakage in response to replication stress: together with MUS81, promotes the endonucleolytic DNA cleavage following prolonged replication stress via its helicase activity, possibly to eliminate cells with excessive replication stress. Plays a major role in remodeling of stalled DNA forks by catalyzing fork regression, in which the fork reverses and the two nascent DNA strands anneal. In addition to the helicase activity, also acts as the substrate-recognition component of the SCF(FBH1) E3 ubiquitin ligase complex, a complex that mediates ubiquitination of RAD51, leading to regulate RAD51 subcellular location. In Homo sapiens (Human), this protein is F-box DNA helicase 1.